Consider the following 258-residue polypeptide: Casein kinase II subunit beta' (258 aa).

The segment covering 1-10 (MGSRSENVGT) has biased composition (polar residues). Positions 1 to 29 (MGSRSENVGTVTREGSRVEQDDVLMDDDS) are disordered.

Belongs to the casein kinase 2 subunit beta family. In terms of assembly, tetramer composed of an alpha subunit, an alpha' subunit, one beta subunit and one beta' subunit. Interacts with FACT subunits POB3 and SPT16. Interaction with YTA7. In terms of processing, phosphorylated by alpha subunit. Post-translationally, the N-terminus is blocked.

In terms of biological role, regulatory subunit of casein kinase II/CK2. As part of the kinase complex regulates the basal catalytic activity of the alpha subunit a constitutively active serine/threonine-protein kinase that phosphorylates a large number of substrates containing acidic residues C-terminal to the phosphorylated serine or threonine. This Saccharomyces cerevisiae (strain ATCC 204508 / S288c) (Baker's yeast) protein is Casein kinase II subunit beta'.